A 948-amino-acid polypeptide reads, in one-letter code: UvrABC system protein A (948 aa).

33 to 40 (GLSGSGKS) contributes to the ATP binding site. The C4-type zinc finger occupies 252–279 (CPICGFSIGELEPRMFSFNSPFGACPTC). 2 ABC transporter domains span residues 309-587 (WIPT…KKSL) and 607-935 (ASDR…KYLK). 639-646 (GVSGSGKS) provides a ligand contact to ATP. The segment at 738-764 (CEACKGDGIIKIEMHFLPDVYVPCEVC) adopts a C4-type zinc-finger fold.

The protein belongs to the ABC transporter superfamily. UvrA family. In terms of assembly, forms a heterotetramer with UvrB during the search for lesions.

The protein localises to the cytoplasm. Functionally, the UvrABC repair system catalyzes the recognition and processing of DNA lesions. UvrA is an ATPase and a DNA-binding protein. A damage recognition complex composed of 2 UvrA and 2 UvrB subunits scans DNA for abnormalities. When the presence of a lesion has been verified by UvrB, the UvrA molecules dissociate. The polypeptide is UvrABC system protein A (Staphylococcus aureus (strain MRSA252)).